A 463-amino-acid polypeptide reads, in one-letter code: Chromosomal replication initiator protein DnaA (463 aa).

The tract at residues 1–83 (MNTNQIILTD…LQLFQHYNNT (83 aa)) is domain I, interacts with DnaA modulators. A domain II region spans residues 83-124 (TIKSIDIITKELPGTTQTVIELPTKTFADIGSSELNSENIFS). The interval 125–343 (TLDVRFTFDN…GALNKVIAHS (219 aa)) is domain III, AAA+ region. ATP-binding residues include glycine 171, glycine 173, lysine 174, and threonine 175. Residues 344–463 (NFTLKEITLE…INLLMKILQH (120 aa)) are domain IV, binds dsDNA.

This sequence belongs to the DnaA family. As to quaternary structure, oligomerizes as a right-handed, spiral filament on DNA at oriC.

The protein resides in the cytoplasm. Functionally, plays an essential role in the initiation and regulation of chromosomal replication. ATP-DnaA binds to the origin of replication (oriC) to initiate formation of the DNA replication initiation complex once per cell cycle. Binds the DnaA box (a 9 base pair repeat at the origin) and separates the double-stranded (ds)DNA. Forms a right-handed helical filament on oriC DNA; dsDNA binds to the exterior of the filament while single-stranded (ss)DNA is stabiized in the filament's interior. The ATP-DnaA-oriC complex binds and stabilizes one strand of the AT-rich DNA unwinding element (DUE), permitting loading of DNA polymerase. After initiation quickly degrades to an ADP-DnaA complex that is not apt for DNA replication. Binds acidic phospholipids. The protein is Chromosomal replication initiator protein DnaA of Rickettsia akari (strain Hartford).